Here is a 491-residue protein sequence, read N- to C-terminus: Trypanothione reductase (491 aa).

35-52 (DVQATHGPPALVALGGTC) is an FAD binding site. A disulfide bond links Cys52 and Cys57. His461 serves as the catalytic Proton acceptor.

The protein belongs to the class-I pyridine nucleotide-disulfide oxidoreductase family. In terms of assembly, homodimer. Requires FAD as cofactor.

Its subcellular location is the cytoplasm. The enzyme catalyses trypanothione + NADP(+) = trypanothione disulfide + NADPH + H(+). Functionally, trypanothione is the parasite analog of glutathione; this enzyme is the equivalent of glutathione reductase. The chain is Trypanothione reductase (TPR) from Leishmania donovani.